A 179-amino-acid polypeptide reads, in one-letter code: MNQPTSLYLASLLEVEWQKPEEFEFPNEFAKHWLEEQGSLSRRLKQHCQELTVELLQNHIVTAKTLKSDESQLLSEQDCLLREVVLCGDDCPWVVGRTLIPRTTLVDQQYDLAQQGDIPLGLTVFSADNVERDSLQMGWVHLPQGRFLARRSRLWMNHKPMLVAELFLSNSPIYAKERV.

Substrate-binding residues include Arg-82, Leu-120, and Glu-165.

The protein belongs to the UbiC family.

The protein localises to the cytoplasm. The catalysed reaction is chorismate = 4-hydroxybenzoate + pyruvate. The protein operates within cofactor biosynthesis; ubiquinone biosynthesis. Functionally, removes the pyruvyl group from chorismate, with concomitant aromatization of the ring, to provide 4-hydroxybenzoate (4HB) for the ubiquinone pathway. This chain is Probable chorismate pyruvate-lyase, found in Vibrio parahaemolyticus serotype O3:K6 (strain RIMD 2210633).